A 258-amino-acid polypeptide reads, in one-letter code: Imidazole glycerol phosphate synthase subunit HisF (258 aa).

Active-site residues include D11 and D130.

Belongs to the HisA/HisF family. As to quaternary structure, heterodimer of HisH and HisF.

The protein resides in the cytoplasm. It catalyses the reaction 5-[(5-phospho-1-deoxy-D-ribulos-1-ylimino)methylamino]-1-(5-phospho-beta-D-ribosyl)imidazole-4-carboxamide + L-glutamine = D-erythro-1-(imidazol-4-yl)glycerol 3-phosphate + 5-amino-1-(5-phospho-beta-D-ribosyl)imidazole-4-carboxamide + L-glutamate + H(+). It functions in the pathway amino-acid biosynthesis; L-histidine biosynthesis; L-histidine from 5-phospho-alpha-D-ribose 1-diphosphate: step 5/9. In terms of biological role, IGPS catalyzes the conversion of PRFAR and glutamine to IGP, AICAR and glutamate. The HisF subunit catalyzes the cyclization activity that produces IGP and AICAR from PRFAR using the ammonia provided by the HisH subunit. This Nitrobacter hamburgensis (strain DSM 10229 / NCIMB 13809 / X14) protein is Imidazole glycerol phosphate synthase subunit HisF.